The following is a 317-amino-acid chain: Putative 2-hydroxyacid dehydrogenase SE_1879 (317 aa).

Residues Glu-155–Ile-156, Ala-234–Arg-236, and Asp-260 contribute to the NAD(+) site. Residue Arg-236 is part of the active site. The active site involves Glu-265. His-283 (proton donor) is an active-site residue. His-283 to Asn-286 is an NAD(+) binding site.

It belongs to the D-isomer specific 2-hydroxyacid dehydrogenase family.

This Staphylococcus epidermidis (strain ATCC 12228 / FDA PCI 1200) protein is Putative 2-hydroxyacid dehydrogenase SE_1879.